Here is a 161-residue protein sequence, read N- to C-terminus: Probable chemoreceptor glutamine deamidase CheD (161 aa).

This sequence belongs to the CheD family.

The catalysed reaction is L-glutaminyl-[protein] + H2O = L-glutamyl-[protein] + NH4(+). In terms of biological role, probably deamidates glutamine residues to glutamate on methyl-accepting chemotaxis receptors (MCPs), playing an important role in chemotaxis. In Syntrophomonas wolfei subsp. wolfei (strain DSM 2245B / Goettingen), this protein is Probable chemoreceptor glutamine deamidase CheD.